The sequence spans 379 residues: Putative nucleosome assembly protein C2D10.11C (379 aa).

Over residues 1-10 (MSKGPGDFKK) the composition is skewed to basic and acidic residues. Disordered regions lie at residues 1–30 (MSKGPGDFKKSWNGFAAQTPQNTPSSDVHL) and 345–379 (SDFNQMDEEDSEDAYTDEEDLSSDDEEILSSEISD). The span at 16 to 28 (AAQTPQNTPSSDV) shows a compositional bias: polar residues.

The protein belongs to the nucleosome assembly protein (NAP) family.

It is found in the nucleus. This is Putative nucleosome assembly protein C2D10.11C from Schizosaccharomyces pombe (strain 972 / ATCC 24843) (Fission yeast).